A 382-amino-acid polypeptide reads, in one-letter code: Intermediate transcription factor 3 large subunit (382 aa).

This sequence belongs to the poxviruses A23 family. In terms of assembly, heterodimer of a 45 kDa and a 32 kDa subunit.

Functionally, acts with RNA polymerase to initiate transcription from intermediate gene promoters. In Monkeypox virus (strain Zaire-96-I-16) (MPX), this protein is Intermediate transcription factor 3 large subunit (VITF3L).